We begin with the raw amino-acid sequence, 906 residues long: Protein translocase subunit SecA (906 aa).

ATP contacts are provided by residues glutamine 86, 104 to 108, and aspartate 499; that span reads GEGKT. Residues 863 to 885 form a disordered region; it reads PVVSRIDPKDRNPDDPTSWGRVS. Zn(2+) is bound by residues cysteine 890, cysteine 892, cysteine 901, and histidine 902.

It belongs to the SecA family. Monomer and homodimer. Part of the essential Sec protein translocation apparatus which comprises SecA, SecYEG and auxiliary proteins SecDF-YajC and YidC. Zn(2+) serves as cofactor.

The protein localises to the cell inner membrane. It is found in the cytoplasm. It catalyses the reaction ATP + H2O + cellular proteinSide 1 = ADP + phosphate + cellular proteinSide 2.. Part of the Sec protein translocase complex. Interacts with the SecYEG preprotein conducting channel. Has a central role in coupling the hydrolysis of ATP to the transfer of proteins into and across the cell membrane, serving both as a receptor for the preprotein-SecB complex and as an ATP-driven molecular motor driving the stepwise translocation of polypeptide chains across the membrane. In Rickettsia akari (strain Hartford), this protein is Protein translocase subunit SecA.